A 227-amino-acid chain; its full sequence is Cytochrome c oxidase subunit 2 (227 aa).

The Mitochondrial intermembrane segment spans residues 1–14; that stretch reads MAYPMQLGFQDATS. A helical membrane pass occupies residues 15-45; it reads PIMEELLHFHDHTLMIVFLISSLVLYIISLM. Residues 46–59 are Mitochondrial matrix-facing; the sequence is LTTKLTHTSTMDAQ. A helical transmembrane segment spans residues 60–87; that stretch reads EVETVWTILPAIILILIALPSLRILYMM. Residues 88–227 lie on the Mitochondrial intermembrane side of the membrane; that stretch reads DEINNPSLTV…HFEEWSASMS (140 aa). Cu cation contacts are provided by His-161, Cys-196, Glu-198, Cys-200, His-204, and Met-207. Glu-198 serves as a coordination point for Mg(2+).

The protein belongs to the cytochrome c oxidase subunit 2 family. As to quaternary structure, component of the cytochrome c oxidase (complex IV, CIV), a multisubunit enzyme composed of 14 subunits. The complex is composed of a catalytic core of 3 subunits MT-CO1, MT-CO2 and MT-CO3, encoded in the mitochondrial DNA, and 11 supernumerary subunits COX4I, COX5A, COX5B, COX6A, COX6B, COX6C, COX7A, COX7B, COX7C, COX8 and NDUFA4, which are encoded in the nuclear genome. The complex exists as a monomer or a dimer and forms supercomplexes (SCs) in the inner mitochondrial membrane with NADH-ubiquinone oxidoreductase (complex I, CI) and ubiquinol-cytochrome c oxidoreductase (cytochrome b-c1 complex, complex III, CIII), resulting in different assemblies (supercomplex SCI(1)III(2)IV(1) and megacomplex MCI(2)III(2)IV(2)). Found in a complex with TMEM177, COA6, COX18, COX20, SCO1 and SCO2. Interacts with TMEM177 in a COX20-dependent manner. Interacts with COX20. Interacts with COX16. Cu cation serves as cofactor.

It localises to the mitochondrion inner membrane. It carries out the reaction 4 Fe(II)-[cytochrome c] + O2 + 8 H(+)(in) = 4 Fe(III)-[cytochrome c] + 2 H2O + 4 H(+)(out). In terms of biological role, component of the cytochrome c oxidase, the last enzyme in the mitochondrial electron transport chain which drives oxidative phosphorylation. The respiratory chain contains 3 multisubunit complexes succinate dehydrogenase (complex II, CII), ubiquinol-cytochrome c oxidoreductase (cytochrome b-c1 complex, complex III, CIII) and cytochrome c oxidase (complex IV, CIV), that cooperate to transfer electrons derived from NADH and succinate to molecular oxygen, creating an electrochemical gradient over the inner membrane that drives transmembrane transport and the ATP synthase. Cytochrome c oxidase is the component of the respiratory chain that catalyzes the reduction of oxygen to water. Electrons originating from reduced cytochrome c in the intermembrane space (IMS) are transferred via the dinuclear copper A center (CU(A)) of subunit 2 and heme A of subunit 1 to the active site in subunit 1, a binuclear center (BNC) formed by heme A3 and copper B (CU(B)). The BNC reduces molecular oxygen to 2 water molecules using 4 electrons from cytochrome c in the IMS and 4 protons from the mitochondrial matrix. This is Cytochrome c oxidase subunit 2 (MT-CO2) from Antilocapra americana (Pronghorn).